The following is a 301-amino-acid chain: MSTQQTHLKQLEAESIQIMREVAAEFENPVMLYSVGKDSSVLLHLARKAFYPGKIPFPLLHVDTNWKFKEMIEFRDRMAKQYGFDLIVHKNPRGLEMNISPFTHGSAKHTDIMKTEGLKQALDMHGFDAAFGGARRDEEKSRAKERVYSFRDSKHRWDPKNQRPELWNIYNGKVDKGESIRVFPLSNWTELDIWQYIYLENIEIPSLYLAEPRPVVKRDGTLIMVDDERMELEPGEAVEQKMVRFRTLGCYPLTGAVESQATTLPEIIQEMLLCTTSERQGRVIDNDSAGSMEKKKMEGYF.

This sequence belongs to the PAPS reductase family. CysD subfamily. In terms of assembly, heterodimer composed of CysD, the smaller subunit, and CysN.

It catalyses the reaction sulfate + ATP + H(+) = adenosine 5'-phosphosulfate + diphosphate. It participates in sulfur metabolism; hydrogen sulfide biosynthesis; sulfite from sulfate: step 1/3. With CysN forms the ATP sulfurylase (ATPS) that catalyzes the adenylation of sulfate producing adenosine 5'-phosphosulfate (APS) and diphosphate, the first enzymatic step in sulfur assimilation pathway. APS synthesis involves the formation of a high-energy phosphoric-sulfuric acid anhydride bond driven by GTP hydrolysis by CysN coupled to ATP hydrolysis by CysD. This chain is Sulfate adenylyltransferase subunit 2, found in Shewanella loihica (strain ATCC BAA-1088 / PV-4).